Reading from the N-terminus, the 105-residue chain is Sulfite reductase, dissimilatory-type subunit gamma (105 aa).

The protein belongs to the DsrC/TusE family. Heterohexamer of two alpha, two beta and two gamma subunits.

The protein localises to the cytoplasm. It catalyses the reaction [DsrC protein]-trisulfide + NAD(+) + 3 H2O = [DsrC protein]-dithiol + sulfite + NADH + 3 H(+). Functionally, catalyzes the reduction of sulfite to sulfide. This is the terminal oxidation reaction in sulfate respiration, a process catalyzed by the sulfate-reducing bacteria. The chain is Sulfite reductase, dissimilatory-type subunit gamma (dsvC) from Nitratidesulfovibrio vulgaris (strain ATCC 29579 / DSM 644 / CCUG 34227 / NCIMB 8303 / VKM B-1760 / Hildenborough) (Desulfovibrio vulgaris).